Reading from the N-terminus, the 422-residue chain is Anhydromevalonate phosphate decarboxylase (422 aa).

Positions 134 and 197 each coordinate Mn(2+). Aspartate 244 (proton acceptor) is an active-site residue.

This sequence belongs to the UbiD family. Requires prenylated FMN as cofactor. It depends on Mn(2+) as a cofactor.

The catalysed reaction is (2E)-3-methyl-5-phosphooxypent-2-enoate + H(+) = isopentenyl phosphate + CO2. It participates in isoprenoid biosynthesis; isopentenyl diphosphate biosynthesis via mevalonate pathway. In terms of biological role, catalyzes the conversion of trans-anhydromevalonate 5-phosphate (tAHMP) into isopentenyl phosphate. Involved in the archaeal mevalonate (MVA) pathway, which provides fundamental precursors for isoprenoid biosynthesis, such as isopentenyl diphosphate (IPP) and dimethylallyl diphosphate (DMAPP). The sequence is that of Anhydromevalonate phosphate decarboxylase from Methanosarcina mazei (strain ATCC BAA-159 / DSM 3647 / Goe1 / Go1 / JCM 11833 / OCM 88) (Methanosarcina frisia).